A 263-amino-acid chain; its full sequence is Hydroxyethylthiazole kinase (263 aa).

Met41 lines the substrate pocket. Positions 117 and 163 each coordinate ATP. Ala190 contributes to the substrate binding site.

Belongs to the Thz kinase family. It depends on Mg(2+) as a cofactor.

The enzyme catalyses 5-(2-hydroxyethyl)-4-methylthiazole + ATP = 4-methyl-5-(2-phosphooxyethyl)-thiazole + ADP + H(+). It participates in cofactor biosynthesis; thiamine diphosphate biosynthesis; 4-methyl-5-(2-phosphoethyl)-thiazole from 5-(2-hydroxyethyl)-4-methylthiazole: step 1/1. In terms of biological role, catalyzes the phosphorylation of the hydroxyl group of 4-methyl-5-beta-hydroxyethylthiazole (THZ). The polypeptide is Hydroxyethylthiazole kinase (Haemophilus influenzae (strain PittEE)).